A 179-amino-acid chain; its full sequence is Large ribosomal subunit protein uL5 (179 aa).

This sequence belongs to the universal ribosomal protein uL5 family. In terms of assembly, part of the 50S ribosomal subunit; part of the 5S rRNA/L5/L18/L25 subcomplex. Contacts the 5S rRNA and the P site tRNA. Forms a bridge to the 30S subunit in the 70S ribosome.

In terms of biological role, this is one of the proteins that bind and probably mediate the attachment of the 5S RNA into the large ribosomal subunit, where it forms part of the central protuberance. In the 70S ribosome it contacts protein S13 of the 30S subunit (bridge B1b), connecting the 2 subunits; this bridge is implicated in subunit movement. Contacts the P site tRNA; the 5S rRNA and some of its associated proteins might help stabilize positioning of ribosome-bound tRNAs. The protein is Large ribosomal subunit protein uL5 of Bacillus anthracis (strain A0248).